Consider the following 417-residue polypeptide: MDMHCKADPFSAMHPGHGGVNQLGGVFVNGRPLPDVVRQRIVELAHQGVRPCDISRQLRVSHGCVSKILGRYYETGSIKPGVIGGSKPKVATPKVVDKIAEYKRQNPTMFAWEIRDRLLAEGICDNDTVPSVSSINRIIRTKVQQPFHPTPDGAGTGVTAPGHTIVPSTASPPVSSASNDPVGSYSINGILGIPRSNGEKRKRDEVEVYTDPAHIRGGGGLHLVWTLRDVSEGSVPNGDSQSGVDSLRKHLRADTFTQQQLEALDRVFERPSYPDVFQASEHIKSEQGNEYSLPALTPGLDEVKSSLSASTNPELGSNVSGTQTYPVVTGRDMASTTLPGYPPHVPPTGQGSYPTSTLAGMVPGSEFSGNPYSHPQYTAYNEAWRFSNPALLSSPYYYSAAPRGSAPAAAAAAYDRH.

Positions 16–142 form a DNA-binding region, paired; that stretch reads GHGGVNQLGG…SSINRIIRTK (127 aa). The segment at 19 to 75 is PAI subdomain; that stretch reads GVNQLGGVFVNGRPLPDVVRQRIVELAHQGVRPCDISRQLRVSHGCVSKILGRYYET. An RED subdomain region spans residues 94–142; sequence KVVDKIAEYKRQNPTMFAWEIRDRLLAEGICDNDTVPSVSSINRIIRTK. At threonine 226 the chain carries Phosphothreonine. The segment at 304 to 325 is disordered; it reads KSSLSASTNPELGSNVSGTQTY. The segment covering 305–325 has biased composition (polar residues); that stretch reads SSLSASTNPELGSNVSGTQTY.

Interacts with ELGN3; the interaction targets PAX2 for destruction. Interacts with TLE4. In terms of tissue distribution, expressed in primitive cells of the kidney, ureter, eye, ear and central nervous system.

The protein localises to the nucleus. Functionally, transcription factor that may have a role in kidney cell differentiation. Has a critical role in the development of the urogenital tract, the eyes, and the CNS. In Homo sapiens (Human), this protein is Paired box protein Pax-2 (PAX2).